A 498-amino-acid polypeptide reads, in one-letter code: MEKYIMSLDQGTTSSRCIIFNKKGEVVSVAQKEFTQIYPKAGWVEHDPLEIWGKQAGVAGEALNIARISPEQIAGIGITNQRETTVVWNKRTGMPVYNAIVWQCRRTAGYCDELREKGIDKTIKEKTGLMLDAYFSATKIKWILDNVEGARELAEKGDLLFGNIDTWLIWNMTKGKIHVTDYTNASRTMLFNIHELKWDEELLEILDIPKSMLPEVKPSSCVYGETDEILFGVSIPISGDAGDQQAALFGQTCFNAGMAKNTYGTGCFLLMNTGEKAVDSKNGLLTTIAVGIDGKVEYALEGSIFIGGAVIQWLRDELRMVKTAQETEKYATEVEDNNGVYLVPAFVGIGAPYWDSYARGTILGLTRGAKKEHIIRAALESMAYQTHDVLKAMEEDSGIELKALKVDGGACQNNFLMQFQSDILGVEVDRPEVVETTALGAAYLAGLAVGYWKDRNEISQNWAISRSFAPAMEDEKKEKLIKGWHKAVTKAMDWEERE.

Residue Thr-12 participates in ADP binding. Thr-12, Thr-13, and Ser-14 together coordinate ATP. Thr-12 is a sn-glycerol 3-phosphate binding site. An ADP-binding site is contributed by Arg-16. Sn-glycerol 3-phosphate contacts are provided by Arg-82, Glu-83, Tyr-134, and Asp-243. 5 residues coordinate glycerol: Arg-82, Glu-83, Tyr-134, Asp-243, and Gln-244. ADP contacts are provided by Thr-265 and Gly-308. 4 residues coordinate ATP: Thr-265, Gly-308, Gln-312, and Gly-409. 2 residues coordinate ADP: Gly-409 and Asn-413.

It belongs to the FGGY kinase family. As to quaternary structure, homotetramer and homodimer (in equilibrium).

It catalyses the reaction glycerol + ATP = sn-glycerol 3-phosphate + ADP + H(+). Its pathway is polyol metabolism; glycerol degradation via glycerol kinase pathway; sn-glycerol 3-phosphate from glycerol: step 1/1. Activated by phosphorylation and inhibited by fructose 1,6-bisphosphate (FBP). Functionally, key enzyme in the regulation of glycerol uptake and metabolism. Catalyzes the phosphorylation of glycerol to yield sn-glycerol 3-phosphate. This Clostridium botulinum (strain Loch Maree / Type A3) protein is Glycerol kinase.